We begin with the raw amino-acid sequence, 314 residues long: Malate dehydrogenase (314 aa).

NAD(+)-binding positions include 12–17 (GAGNIG) and Asp36. 2 residues coordinate substrate: Arg85 and Arg91. NAD(+) is bound by residues Asn98 and 121–123 (VTN). Asn123 and Arg154 together coordinate substrate. Catalysis depends on His178, which acts as the Proton acceptor.

The protein belongs to the LDH/MDH superfamily. MDH type 3 family.

The catalysed reaction is (S)-malate + NAD(+) = oxaloacetate + NADH + H(+). Catalyzes the reversible oxidation of malate to oxaloacetate. The protein is Malate dehydrogenase of Wolbachia pipientis subsp. Culex pipiens (strain wPip).